We begin with the raw amino-acid sequence, 352 residues long: Photosystem II D2 protein (352 aa).

The Cytoplasmic portion of the chain corresponds to 1–31 (MTIAIGRAPAERGWFDILDDWLKRDRFVFVG). Residues 32–53 (WSGILLFPCAYLALGGWLTGTT) form a helical membrane-spanning segment. The Lumenal portion of the chain corresponds to 54–108 (FVTSWYTHGLASSYLEGCNFLTVAVSTPANSMGHSLLLLWGPEAQGDFTRWCQLG). The helical transmembrane segment at 109–131 (GLWTFIALHGAFGLIGFMLRQFE) threads the bilayer. Residue histidine 117 coordinates chlorophyll a. Glutamine 129 contacts pheophytin a. The Cytoplasmic segment spans residues 132–140 (IARLVGVRP). Residues 141–160 (YNAIAFSAPIAVFVSVFLIY) form a helical membrane-spanning segment. Asparagine 142 is a binding site for pheophytin a. Residues 161-193 (PLGQSSWFFAPSFGVAAIFRFLLFFQGFHNWTL) are Lumenal-facing. The chain crosses the membrane as a helical span at residues 194-217 (NPFHMMGVAGVLGGALLCAIHGAT). Histidine 197 serves as a coordination point for chlorophyll a. The a plastoquinone site is built by histidine 214 and phenylalanine 261. Residue histidine 214 coordinates Fe cation. The Cytoplasmic segment spans residues 218-265 (VENTLFQDGEGASTFRAFNPTQAEETYSMVTANRFWSQIFGIAFSNKR). A helical membrane pass occupies residues 266-288 (WLHFFMLFVPVTGLWMSAIGVVG). A Fe cation-binding site is contributed by histidine 268. The Lumenal segment spans residues 289-352 (LALNLRSYDF…EEVLPRGNAL (64 aa)).

This sequence belongs to the reaction center PufL/M/PsbA/D family. As to quaternary structure, PSII is composed of 1 copy each of membrane proteins PsbA, PsbB, PsbC, PsbD, PsbE, PsbF, PsbH, PsbI, PsbJ, PsbK, PsbL, PsbM, PsbT, PsbX, PsbY, PsbZ, Psb30/Ycf12, peripheral proteins PsbO, CyanoQ (PsbQ), PsbU, PsbV and a large number of cofactors. It forms dimeric complexes. Part of a photosystem II (PSII) assembly intermediate complex PSII-I; crystallized from a strain deleted of psbJ, it forms monomeric PSII before addition of the oxygen evolving complex. PSII-I includes 3 assembly factors not found in mature PSII (Psb27, Psb28 and Psb34). It depends on The D1/D2 heterodimer binds P680, chlorophylls that are the primary electron donor of PSII, and subsequent electron acceptors. It shares a non-heme iron and each subunit binds pheophytin, quinone, additional chlorophylls, carotenoids and lipids. There is also a Cl(-1) ion associated with D1 and D2, which is required for oxygen evolution. PSII binds additional chlorophylls, carotenoids and specific lipids. as a cofactor.

The protein resides in the cellular thylakoid membrane. It carries out the reaction 2 a plastoquinone + 4 hnu + 2 H2O = 2 a plastoquinol + O2. Functionally, photosystem II (PSII) is a light-driven water:plastoquinone oxidoreductase that uses light energy to abstract electrons from H(2)O, generating O(2) and a proton gradient subsequently used for ATP formation. It consists of a core antenna complex that captures photons, and an electron transfer chain that converts photonic excitation into a charge separation. The D1/D2 (PsbA/PsbD) reaction center heterodimer binds P680, the primary electron donor of PSII as well as several subsequent electron acceptors. D2 is needed for assembly of a stable PSII complex. In Thermosynechococcus vestitus (strain NIES-2133 / IAM M-273 / BP-1), this protein is Photosystem II D2 protein.